A 363-amino-acid chain; its full sequence is Chorismate synthase (363 aa).

A disordered region spans residues 44–63; that stretch reads DLDRRKPGTSRHTTQRQEPD. Positions 48 and 54 each coordinate NADP(+). FMN contacts are provided by residues 125–127, 237–238, Gly277, 292–296, and Arg318; these read RSS, NA, and KATSS.

Belongs to the chorismate synthase family. As to quaternary structure, homotetramer. FMNH2 serves as cofactor.

It carries out the reaction 5-O-(1-carboxyvinyl)-3-phosphoshikimate = chorismate + phosphate. It functions in the pathway metabolic intermediate biosynthesis; chorismate biosynthesis; chorismate from D-erythrose 4-phosphate and phosphoenolpyruvate: step 7/7. Its function is as follows. Catalyzes the anti-1,4-elimination of the C-3 phosphate and the C-6 proR hydrogen from 5-enolpyruvylshikimate-3-phosphate (EPSP) to yield chorismate, which is the branch point compound that serves as the starting substrate for the three terminal pathways of aromatic amino acid biosynthesis. This reaction introduces a second double bond into the aromatic ring system. The chain is Chorismate synthase from Pseudomonas fluorescens (strain SBW25).